The primary structure comprises 53 residues: Temporin-SHd (53 aa).

An N-terminal signal peptide occupies residues 1–10 (FLGTINLSLC). A propeptide spanning residues 11–34 (EQERDADEEKRDEPDESDVEVEKR) is cleaved from the precursor. F51 bears the Phenylalanine amide mark.

It is found in the secreted. Its subcellular location is the target cell membrane. Its function is as follows. Non-amphipathic mildly cationic alpha-helical antimicrobial peptide with potent activity against Gram-positive (including methicillin-resistant Staphylococcus aureus (MRSA)) and Gram-negative bacteria, and some fungi, as well as against Trypanosoma and Leishmania (both promastigote and amastigote forms). Strongly and selectively perturbs anionic bilayer membranes by interacting with the polar head groups and acyl region of the phospholipids, with formation of regions of two coexisting phases, one phase rich in peptide and the other lipid-rich. Shows low hemolytic activity (LC(50)=44 uM) and a low toxicity for human monocytes THP-1 and THP-1-derived macrophages. Is not toxic to human hepatoma-derived cells. The polypeptide is Temporin-SHd (Pelophylax saharicus (Sahara frog)).